A 68-amino-acid chain; its full sequence is Beta-toxin Im-2 (68 aa).

Positions 1-67 (KDGYPMVRAG…VWTYEKNTCK (67 aa)) constitute an LCN-type CS-alpha/beta domain. Cystine bridges form between C15-C66, C19-C40, C26-C47, and C30-C49.

Belongs to the long (4 C-C) scorpion toxin superfamily. Sodium channel inhibitor family. Beta subfamily. Expressed by the venom gland.

It is found in the secreted. Its function is as follows. Beta toxins bind voltage-independently at site-4 of sodium channels (Nav) and shift the voltage of activation toward more negative potentials thereby affecting sodium channel activation and promoting spontaneous and repetitive firing. Is toxic to both insect and mammals. Induces paralysis in Acheta domestica crickets, but does not induce death, whereas intracerebroventricular injection into mice causes immediate death (at a dose of 0.05 ug/g). The polypeptide is Beta-toxin Im-2 (Isometrus maculatus (Lesser brown scorpion)).